We begin with the raw amino-acid sequence, 177 residues long: Bifunctional protein PyrR (177 aa).

Residues 99-111 (VILIDDVLYTGRT) carry the PRPP-binding motif.

This sequence belongs to the purine/pyrimidine phosphoribosyltransferase family. PyrR subfamily. In terms of assembly, homodimer and homohexamer; in equilibrium.

It carries out the reaction UMP + diphosphate = 5-phospho-alpha-D-ribose 1-diphosphate + uracil. Its function is as follows. Regulates transcriptional attenuation of the pyrimidine nucleotide (pyr) operon by binding in a uridine-dependent manner to specific sites on pyr mRNA. This disrupts an antiterminator hairpin in the RNA and favors formation of a downstream transcription terminator, leading to a reduced expression of downstream genes. Also displays a weak uracil phosphoribosyltransferase activity which is not physiologically significant. This is Bifunctional protein PyrR from Pediococcus pentosaceus (strain ATCC 25745 / CCUG 21536 / LMG 10740 / 183-1w).